The sequence spans 338 residues: Anthranilate phosphoribosyltransferase (338 aa).

5-phospho-alpha-D-ribose 1-diphosphate contacts are provided by residues glycine 81, 84-85, serine 89, 91-94, 109-117, and alanine 121; these read GD, NVST, and KHGNRALSS. Residue glycine 81 participates in anthranilate binding. Serine 93 is a binding site for Mg(2+). Anthranilate is bound at residue asparagine 112. Arginine 167 lines the anthranilate pocket. Mg(2+) is bound by residues aspartate 226 and glutamate 227.

Belongs to the anthranilate phosphoribosyltransferase family. As to quaternary structure, homodimer. The cofactor is Mg(2+).

It carries out the reaction N-(5-phospho-beta-D-ribosyl)anthranilate + diphosphate = 5-phospho-alpha-D-ribose 1-diphosphate + anthranilate. Its pathway is amino-acid biosynthesis; L-tryptophan biosynthesis; L-tryptophan from chorismate: step 2/5. Functionally, catalyzes the transfer of the phosphoribosyl group of 5-phosphorylribose-1-pyrophosphate (PRPP) to anthranilate to yield N-(5'-phosphoribosyl)-anthranilate (PRA). The protein is Anthranilate phosphoribosyltransferase of Rhodopseudomonas palustris (strain ATCC BAA-98 / CGA009).